The chain runs to 308 residues: Ribosomal RNA small subunit methyltransferase H (308 aa).

S-adenosyl-L-methionine is bound by residues Gly-36 to His-38, Asp-55, Phe-86, Asp-103, and Gln-110.

Belongs to the methyltransferase superfamily. RsmH family.

It is found in the cytoplasm. It catalyses the reaction cytidine(1402) in 16S rRNA + S-adenosyl-L-methionine = N(4)-methylcytidine(1402) in 16S rRNA + S-adenosyl-L-homocysteine + H(+). Its function is as follows. Specifically methylates the N4 position of cytidine in position 1402 (C1402) of 16S rRNA. This Helicobacter pylori (strain G27) protein is Ribosomal RNA small subunit methyltransferase H.